The primary structure comprises 209 residues: T-cell surface glycoprotein CD8 beta chain (209 aa).

Positions 1–21 are cleaved as a signal peptide; the sequence is MRPRMWLLLSAQLAALHGNSV. An Ig-like V-type domain is found at 22–131; the sequence is LQQTPAYIMV…TLIFGTGTQL (110 aa). The Extracellular portion of the chain corresponds to 22–169; sequence LQQTPAYIMV…ETRKGPLCSP (148 aa). A disulfide bridge connects residues C41 and C115. Residue N101 is glycosylated (N-linked (GlcNAc...) asparagine). Residues 170–190 form a helical membrane-spanning segment; it reads ITLSLLVAGILVLLVSLGVAI. The Cytoplasmic segment spans residues 191 to 209; sequence HLYCRQRRARLRFMKQFYK.

Forms disulfide-linked heterodimers with CD8A at the cell surface. Interacts with CD3D; this interaction couples TCR-CD3 with CD8. Interacts with LCK. Post-translationally, phosphorylated as a consequence of T-cell activation. In terms of processing, palmitoylated at the cytoplasmic tail and thereby targets the heterodimer CD8A/CD8B to lipid rafts unlike CD8A homodimers.

The protein localises to the cell membrane. Functionally, integral membrane glycoprotein that plays an essential role in the immune response and serves multiple functions in responses against both external and internal offenses. In T-cells, functions primarily as a coreceptor for MHC class I molecule:peptide complex. The antigens presented by class I peptides are derived from cytosolic proteins while class II derived from extracellular proteins. Interacts simultaneously with the T-cell receptor (TCR) and the MHC class I proteins presented by antigen presenting cells (APCs). In turn, recruits the Src kinase LCK to the vicinity of the TCR-CD3 complex. A palmitoylation site in the cytoplasmic tail of CD8B chain contributes to partitioning of CD8 into the plasma membrane lipid rafts where signaling proteins are enriched. Once LCK recruited, it initiates different intracellular signaling pathways by phosphorylating various substrates ultimately leading to lymphokine production, motility, adhesion and activation of cytotoxic T-lymphocytes (CTLs). Additionally, plays a critical role in thymic selection of CD8+ T-cells. This is T-cell surface glycoprotein CD8 beta chain (CD8B) from Saimiri sciureus (Common squirrel monkey).